The sequence spans 316 residues: Ester hydrolase C11orf54 homolog (316 aa).

3 residues coordinate Zn(2+): His-267, His-269, and His-279.

In terms of assembly, monomer. It depends on Zn(2+) as a cofactor.

Its subcellular location is the nucleus. It is found in the cytoplasm. Functionally, exhibits ester hydrolase activity on the substrate p-nitrophenyl acetate, in vitro. May regulate DNA damage and repair by regulating HIF1A degradation via chaperone-mediated autophagy (CMA). This chain is Ester hydrolase C11orf54 homolog, found in Xenopus laevis (African clawed frog).